The chain runs to 113 residues: MTTSFYFLLVALGLLLYVCQSSFGNQHTRNSDTPKHRCGSELADQYVQLCHGKRNDAGKKRGRASPLWQRQGFLSMLKAKRNEAFFLQRDGRGIVEVCCDNPCTVATLMTFCH.

The first 21 residues, 1 to 21, serve as a signal peptide directing secretion; that stretch reads MTTSFYFLLVALGLLLYVCQS. Positions 22–29 are excised as a propeptide; that stretch reads SFGNQHTR. P34 bears the 4-hydroxyproline; partial mark. 3 cysteine pairs are disulfide-bonded: C38-C99, C50-C112, and C98-C103. The residue at position 41 (E41) is a 4-carboxyglutamate. Residue H51 is modified to Histidine amide. A propeptide spans 52–92 (c peptide); that stretch reads GKRNDAGKKRGRASPLWQRQGFLSMLKAKRNEAFFLQRDGR. At E96 the chain carries 4-carboxyglutamate. Position 102 is a 4-hydroxyproline; partial (P102).

The protein belongs to the insulin family. Heterodimer of A and B chains; disulfide-linked. It is noteworthy that in this dimer, in contrast to Con-Ins G1, the chain B is amidated and not the chain A. As to expression, expressed by the venom gland.

The protein resides in the secreted. Functionally, this venom insulin, from a fish-hunting cone snail, facilitates prey capture by rapidly inducing hypoglycemic shock. It is one of the smallest known insulin found in nature and lacks the C-terminal segment of the B chain that, in human insulin, mediates engagement of the insulin receptor (INSR) and assembly of the hormone's hexameric storage form. Despite lacking this segment, it both binds and activates human insulin receptor (long isoform (HIR-B)) with only a 10-fold lower potency. In vivo, intraperitoneal injection of this peptide into zebrafish lowers blood glucose with the same potency than human insulin. In addition, when applied to water, this peptide reduces overall locomotor activity of zebrafish larvae, observed as a significant decrease in the percentage of time spent swimming and movement frequency. This chain is Con-Ins G3b, found in Conus geographus (Geography cone).